The sequence spans 427 residues: Adenylosuccinate synthetase (427 aa).

GTP is bound by residues 12 to 18 (GDEGKGK) and 40 to 42 (GHT). Aspartate 13 functions as the Proton acceptor in the catalytic mechanism. Mg(2+) is bound by residues aspartate 13 and glycine 40. IMP contacts are provided by residues 13–16 (DEGK), 38–41 (NAGH), threonine 128, arginine 142, glutamine 223, threonine 238, and arginine 302. The Proton donor role is filled by histidine 41. Residue 298–304 (VTTGRDR) participates in substrate binding. Residues arginine 304, 330–332 (KLD), and 412–414 (GVG) contribute to the GTP site.

This sequence belongs to the adenylosuccinate synthetase family. In terms of assembly, homodimer. Mg(2+) serves as cofactor.

It is found in the cytoplasm. The enzyme catalyses IMP + L-aspartate + GTP = N(6)-(1,2-dicarboxyethyl)-AMP + GDP + phosphate + 2 H(+). Its pathway is purine metabolism; AMP biosynthesis via de novo pathway; AMP from IMP: step 1/2. Its function is as follows. Plays an important role in the de novo pathway of purine nucleotide biosynthesis. Catalyzes the first committed step in the biosynthesis of AMP from IMP. The protein is Adenylosuccinate synthetase of Streptomyces griseus subsp. griseus (strain JCM 4626 / CBS 651.72 / NBRC 13350 / KCC S-0626 / ISP 5235).